The following is a 244-amino-acid chain: Small ribosomal subunit protein uS3 (244 aa).

Positions 39–110 (IRDYVRKNLS…QIRINVIEVE (72 aa)) constitute a KH type-2 domain. A disordered region spans residues 215 to 244 (EDAAPSNVGQPRRRNQQRRRQQFEDRSNEG). The segment covering 225-234 (PRRRNQQRRR) has biased composition (basic residues). The span at 235 to 244 (QQFEDRSNEG) shows a compositional bias: basic and acidic residues.

Belongs to the universal ribosomal protein uS3 family. As to quaternary structure, part of the 30S ribosomal subunit. Forms a tight complex with proteins S10 and S14.

Its function is as follows. Binds the lower part of the 30S subunit head. Binds mRNA in the 70S ribosome, positioning it for translation. This is Small ribosomal subunit protein uS3 from Synechococcus sp. (strain ATCC 27144 / PCC 6301 / SAUG 1402/1) (Anacystis nidulans).